We begin with the raw amino-acid sequence, 357 residues long: Histidine biosynthesis bifunctional protein HisB (357 aa).

Residues 1-168 (MTPILFIDRD…GIAHALADAP (168 aa)) are histidinol-phosphatase. Residue Asp-8 is the Nucleophile of the active site. Positions 8, 10, and 128 each coordinate Mg(2+). Asp-10 functions as the Proton donor in the catalytic mechanism. The tract at residues 169 to 357 (RTAVVQRDTK…TALPSTKGAL (189 aa)) is imidazoleglycerol-phosphate dehydratase.

This sequence in the N-terminal section; belongs to the histidinol-phosphatase family. It in the C-terminal section; belongs to the imidazoleglycerol-phosphate dehydratase family. Mg(2+) serves as cofactor.

It localises to the cytoplasm. It carries out the reaction D-erythro-1-(imidazol-4-yl)glycerol 3-phosphate = 3-(imidazol-4-yl)-2-oxopropyl phosphate + H2O. It catalyses the reaction L-histidinol phosphate + H2O = L-histidinol + phosphate. The protein operates within amino-acid biosynthesis; L-histidine biosynthesis; L-histidine from 5-phospho-alpha-D-ribose 1-diphosphate: step 6/9. Its pathway is amino-acid biosynthesis; L-histidine biosynthesis; L-histidine from 5-phospho-alpha-D-ribose 1-diphosphate: step 8/9. The chain is Histidine biosynthesis bifunctional protein HisB from Stenotrophomonas maltophilia (strain K279a).